Here is a 118-residue protein sequence, read N- to C-terminus: Large ribosomal subunit protein uL18 (118 aa).

Belongs to the universal ribosomal protein uL18 family. Part of the 50S ribosomal subunit; part of the 5S rRNA/L5/L18/L25 subcomplex. Contacts the 5S and 23S rRNAs.

In terms of biological role, this is one of the proteins that bind and probably mediate the attachment of the 5S RNA into the large ribosomal subunit, where it forms part of the central protuberance. This chain is Large ribosomal subunit protein uL18, found in Acidobacterium capsulatum (strain ATCC 51196 / DSM 11244 / BCRC 80197 / JCM 7670 / NBRC 15755 / NCIMB 13165 / 161).